The sequence spans 587 residues: Solute carrier family 13 member 2 (587 aa).

The next 4 helical transmembrane spans lie at 13–33 (FYLIVLCLPIFLLPLPLIVQT), 53–73 (ALPLAVTALFPIVLFPLMGIM), 86–106 (TNILFVGGLMVAIAVEHWNLH), and 136–156 (SMWISNTATTAMMVPIGHAVL). The interval 188–208 (KLDNGQPVSAPSEPRTQKTQE) is disordered. The next 8 helical transmembrane spans lie at 264 to 284 (FAFPTMIILLLLAWLWLQVLF), 329 to 349 (VLFVLLVVLWFTREPGFFPGW), 367 to 387 (TVAIFISLVMFIIPSKIPGLM), 407 to 427 (TVNDKMPWNIVILLGGGFALA), 445 to 465 (PLQHIPPSATAVILCLLIAIF), 477 to 497 (LFLPILASMAQAICLHPLYVM), 506 to 526 (LAFMLPVATPPNAIVFSFGGL), and 535 to 555 (GFLLNIIGVLAITLSINSWSI).

This sequence belongs to the SLC13A/DASS transporter (TC 2.A.47) family. NADC subfamily. As to expression, expressed in large and small intestine and in the kidney proximal tubules.

It is found in the apical cell membrane. The enzyme catalyses succinate(out) + 3 Na(+)(out) = succinate(in) + 3 Na(+)(in). The catalysed reaction is fumarate(out) + 3 Na(+)(out) = fumarate(in) + 3 Na(+)(in). It carries out the reaction 2-oxoglutarate(out) + 3 Na(+)(out) = 2-oxoglutarate(in) + 3 Na(+)(in). Its activity is regulated as follows. Li(+) decreases succinate transport in the presence of Na(+), by competing at one of the three cation binding sites. Its function is as follows. Low-affinity sodium-dicarboxylate cotransporter, that mediates the entry of citric acid cycle intermediates, such as succinate, citrate, fumarate and alpha-ketoglutarate (2-oxoglutarate) into the small intestine and renal proximal tubule. Transports the dicarboxylate into the cell with a probable stoichiometry of 3 Na(+) for 1 divalent dicarboxylate, rendering the process electrogenic. Citrate is transported in protonated form as a divalent anion, rather than the trivalent form which is normally found in blood. Has a critical role in renal dicarboxylate transport. The sequence is that of Solute carrier family 13 member 2 (Slc13a2) from Rattus norvegicus (Rat).